A 176-amino-acid chain; its full sequence is Ribosome maturation factor RimM (176 aa).

One can recognise a PRC barrel domain in the interval lysine 99–leucine 173.

The protein belongs to the RimM family. As to quaternary structure, binds ribosomal protein uS19.

It is found in the cytoplasm. In terms of biological role, an accessory protein needed during the final step in the assembly of 30S ribosomal subunit, possibly for assembly of the head region. Essential for efficient processing of 16S rRNA. May be needed both before and after RbfA during the maturation of 16S rRNA. It has affinity for free ribosomal 30S subunits but not for 70S ribosomes. The sequence is that of Ribosome maturation factor RimM from Prochlorococcus marinus (strain MIT 9211).